Consider the following 174-residue polypeptide: MGFEWPWQYNFPPFFTLQPNVDTRQKQLSAWSSLVLSYCRQNKLYTMNLMEIQESPLFNNKKIQRKLSLESVQVVLEELRKKGNLEWIDKNKSRFLIMWRRPDEWGKVIYQWVSKNGMTNSVFTLYELISGDDTEGEEFHGLDEAMLLRSLEALQQEHKAEIITLNESRGVKFF.

It belongs to the VPS25 family. As to quaternary structure, component of the endosomal sorting complex required for transport II (ESCRT-II), composed of SNF8, VPS36 and 2 copies of VPS25.

It is found in the cytoplasm. Component of the ESCRT-II complex (endosomal sorting complex required for transport II), which is required for multivesicular body (MVB) formation and sorting of endosomal cargo proteins into MVBs. The MVB pathway mediates delivery of transmembrane proteins into the lumen of the lysosome for degradation. The ESCRT-II complex is probably involved in the recruitment of the ESCRT-III complex. The polypeptide is Vacuolar protein-sorting-associated protein 25 (vps25) (Xenopus laevis (African clawed frog)).